A 351-amino-acid chain; its full sequence is tRNA-specific 2-thiouridylase MnmA 2 (351 aa).

ATP-binding positions include 13–20 (GMSGGTDS) and phenylalanine 39. Cysteine 98 acts as the Nucleophile in catalysis. Cysteine 98 and cysteine 195 are joined by a disulfide. Glycine 122 serves as a coordination point for ATP. The segment at 144–146 (KDQ) is interaction with tRNA. Cysteine 195 serves as the catalytic Cysteine persulfide intermediate. Residues 301–302 (RY) form an interaction with tRNA region.

This sequence belongs to the MnmA/TRMU family.

Its subcellular location is the cytoplasm. The catalysed reaction is S-sulfanyl-L-cysteinyl-[protein] + uridine(34) in tRNA + AH2 + ATP = 2-thiouridine(34) in tRNA + L-cysteinyl-[protein] + A + AMP + diphosphate + H(+). Its function is as follows. Catalyzes the 2-thiolation of uridine at the wobble position (U34) of tRNA, leading to the formation of s(2)U34. This is tRNA-specific 2-thiouridylase MnmA 2 from Phocaeicola vulgatus (strain ATCC 8482 / DSM 1447 / JCM 5826 / CCUG 4940 / NBRC 14291 / NCTC 11154) (Bacteroides vulgatus).